The chain runs to 545 residues: Membrane protein insertase YidC (545 aa).

The next 4 membrane-spanning stretches (helical) occupy residues 350 to 370, 424 to 444, 461 to 481, and 498 to 518; these read IIGN…AVLY, LPML…FASV, ADPY…QTYL, and PLVF…YWVI.

This sequence belongs to the OXA1/ALB3/YidC family. Type 1 subfamily. Interacts with the Sec translocase complex via SecD. Specifically interacts with transmembrane segments of nascent integral membrane proteins during membrane integration.

It is found in the cell inner membrane. Functionally, required for the insertion and/or proper folding and/or complex formation of integral membrane proteins into the membrane. Involved in integration of membrane proteins that insert both dependently and independently of the Sec translocase complex, as well as at least some lipoproteins. Aids folding of multispanning membrane proteins. The chain is Membrane protein insertase YidC from Neisseria meningitidis serogroup A / serotype 4A (strain DSM 15465 / Z2491).